Consider the following 91-residue polypeptide: UPF0512 protein F (91 aa).

Belongs to the UPF0512 family.

The sequence is that of UPF0512 protein F from Dictyostelium discoideum (Social amoeba).